The sequence spans 665 residues: Filensin (665 aa).

The interval 1-40 (MYRRSYVFQTRKEQYEHADEASRAAEPERPADEGWAGATS) is head. Serine 5 carries the phosphoserine modification. Residues 40-320 (SLAALQGLGE…RIIEIEGNRL (281 aa)) form the IF rod domain. Residues 41–75 (LAALQGLGERVAAHVQRARALEQRHAGLRRQLDAF) form a coil 1A region. An N-acetylalanine modification is found at alanine 42. The interval 76 to 84 (QRLGELAGP) is linker 1. The segment at 85-184 (EDALARQVES…RHKKNLLEVQ (100 aa)) is coil 1B. Residues 185 to 201 (TYISILQQIIHTTPPAS) form a linker 12 region. The interval 202–320 (IVTSGMREEK…RIIEIEGNRL (119 aa)) is coil 2. The segment at 321-665 (TSAFIETPIP…DKKKSGEKSS (345 aa)) is tail. Residues serine 341 and serine 420 each carry the phosphoserine modification. 2 disordered regions span residues 410 to 439 (SKFE…QISK) and 506 to 614 (YDGQ…KGPP). Glycine 434 carries the N-myristoyl glycine lipid modification. A Phosphoserine modification is found at serine 513. A compositionally biased stretch (basic and acidic residues) spans 556 to 571 (PEEKREGEERDEESRR). Position 665 is a phosphoserine (serine 665).

Belongs to the intermediate filament family. Part of a complex required for lens intermediate filament formation composed of BFSP1, BFSP2 and CRYAA. Identified in a complex that contains VIM, EZR, AHNAK, BFSP1, BFSP2, ANK2, PLEC, PRX and spectrin. Found in a complex composed of PPL (via C-terminal linker domain), BFSP1 and BFSP2 in the retinal lens. Within the complex interacts with BFSP2. Interacts (via C-terminus) with MIP (via C-terminus) in aged lens fiber cells. In terms of processing, proteolytically cleaved during lens cell fiber differentiation with increased fragmentation as fiber cell age increases. Myristoylated at Gly-434 following proteolytic cleavage at Asp-433. Post-translationally, acetylated at Ala-42 following proteolytic cleavage at Leu-41. In terms of tissue distribution, expressed in the cortex and nucleus of the retina lens (at protein level).

The protein localises to the cell membrane. It is found in the cytoplasm. The protein resides in the cytoskeleton. Its subcellular location is the cell cortex. Functionally, required for the correct formation of lens intermediate filaments as part of a complex composed of BFSP1, BFSP2 and CRYAA. Involved in altering the calcium regulation of MIP water permeability. In Homo sapiens (Human), this protein is Filensin (BFSP1).